The primary structure comprises 836 residues: Serine/threonine-protein kinase ATG1 (836 aa).

One can recognise a Protein kinase domain in the interval 21–321 (YTVEKEIGKG…FNEFFNNEVV (301 aa)). Residues 27–35 (IGKGSFAIV) and Lys-50 each bind ATP. The active-site Proton acceptor is Asp-168. Disordered stretches follow at residues 387-425 (EHYR…GQTR), 458-489 (NNGP…GGRR), and 619-642 (CAID…TPGA). The span at 395 to 404 (LQGQQQQQQQ) shows a compositional bias: low complexity. Composition is skewed to polar residues over residues 411–425 (RGST…GQTR), 459–468 (NGPTTNNQGA), and 630–640 (GNPSSNQTLTP). Residues 571–836 (ITPFVESLSA…RLKALKSKMS (266 aa)) are interaction with ATG13.

It belongs to the protein kinase superfamily. Ser/Thr protein kinase family. APG1/unc-51/ULK1 subfamily. As to quaternary structure, homodimer. Dimerization requires the presence of ATG13. Forms a ternary complex with ATG13 and ATG17.

The protein resides in the cytoplasm. The protein localises to the preautophagosomal structure membrane. It catalyses the reaction L-seryl-[protein] + ATP = O-phospho-L-seryl-[protein] + ADP + H(+). The catalysed reaction is L-threonyl-[protein] + ATP = O-phospho-L-threonyl-[protein] + ADP + H(+). In terms of biological role, serine/threonine protein kinase involved in the cytoplasm to vacuole transport (Cvt) and found to be essential in autophagy, where it is required for the formation of autophagosomes. Involved in the clearance of protein aggregates which cannot be efficiently cleared by the proteasome. Required for selective autophagic degradation of the nucleus (nucleophagy) as well as for mitophagy which contributes to regulate mitochondrial quantity and quality by eliminating the mitochondria to a basal level to fulfill cellular energy requirements and preventing excess ROS production. Also involved in endoplasmic reticulum-specific autophagic process, in selective removal of ER-associated degradation (ERAD) substrates. Plays a key role in ATG9 and ATG23 cycling through the pre-autophagosomal structure and is necessary to promote ATG18 binding to ATG9 through phosphorylation of ATG9. Catalyzes phosphorylation of ATG4, decreasing the interaction between ATG4 and ATG8 and impairing deconjugation of PE-conjugated forms of ATG8. The polypeptide is Serine/threonine-protein kinase ATG1 (Kluyveromyces marxianus (strain DMKU3-1042 / BCC 29191 / NBRC 104275) (Yeast)).